Consider the following 601-residue polypeptide: Probable translation initiation factor IF-2 (601 aa).

One can recognise a tr-type G domain in the interval 14–229 (LRTPIVAVLG…VMMGLSQRYM (216 aa)). The tract at residues 23-30 (GHVDHGKT) is G1. 23 to 30 (GHVDHGKT) serves as a coordination point for GTP. The G2 stretch occupies residues 48–52 (AITQH). The tract at residues 85–88 (DTPG) is G3. GTP contacts are provided by residues 85 to 89 (DTPGH) and 139 to 142 (NKID). Positions 139 to 142 (NKID) are G4. Positions 207-209 (SAE) are G5.

It belongs to the TRAFAC class translation factor GTPase superfamily. Classic translation factor GTPase family. IF-2 subfamily.

Functionally, function in general translation initiation by promoting the binding of the formylmethionine-tRNA to ribosomes. Seems to function along with eIF-2. This is Probable translation initiation factor IF-2 from Haloarcula marismortui (strain ATCC 43049 / DSM 3752 / JCM 8966 / VKM B-1809) (Halobacterium marismortui).